Consider the following 173-residue polypeptide: Plasmolipin (173 aa).

The Cytoplasmic portion of the chain corresponds to 1-34 (MADFPGKVSTQTSSQEPQRSFAISSSVDMGFIKS). The 130-residue stretch at 31 to 160 (FIKSIPGILL…SSYFAYLGWR (130 aa)) folds into the MARVEL domain. The chain crosses the membrane as a helical span at residues 35 to 55 (IPGILLIAEIVVGLLVWTLIA). The Extracellular segment spans residues 56 to 67 (STPHYLIPALGW). The chain crosses the membrane as a helical span at residues 68–88 (VLFVSITLWLLSIALLVILLL). The Cytoplasmic segment spans residues 89 to 98 (SLHQRLPSVP). A helical membrane pass occupies residues 99–119 (WPLVLLVFYSVAALLYLTAFL). Residues 120 to 138 (ANAATVPGGYYQGHLGASA) are Extracellular-facing. Residues 139 to 159 (FFGIVETLLYTASSYFAYLGW) traverse the membrane as a helical segment. The Cytoplasmic portion of the chain corresponds to 160 to 173 (RGEGQNAAGSTVPV).

This sequence belongs to the MAL family. In terms of assembly, forms oligomers. In terms of tissue distribution, expressed in the posterior midgut.

It localises to the cell membrane. The protein localises to the myelin membrane. It is found in the apical cell membrane. The protein resides in the recycling endosome membrane. Its subcellular location is the vesicle. In terms of biological role, main component of the myelin sheath that plays an important role in myelin membrane biogenesis and myelination. Plays an essential function in apical endocytosis. Plays an important role by activating the Notch signaling pathway, which is essential for cell differentiation and results in correct patterning of the intestinal epithelium, particularly of the posterior gut absorptive cells. The sequence is that of Plasmolipin (pllp) from Danio rerio (Zebrafish).